The following is a 311-amino-acid chain: HPr kinase/phosphorylase (311 aa).

Catalysis depends on residues His-138 and Lys-159. 153–160 (GDSGIGKS) lines the ATP pocket. Ser-160 contacts Mg(2+). The Proton acceptor; for phosphorylation activity. Proton donor; for dephosphorylation activity role is filled by Asp-177. The tract at residues 201–210 (LEIRGVGIIN) is important for the catalytic mechanism of both phosphorylation and dephosphorylation. Residue Glu-202 coordinates Mg(2+). The active site involves Arg-243. The segment at 264–269 (PVKTGR) is important for the catalytic mechanism of dephosphorylation.

This sequence belongs to the HPrK/P family. Homohexamer. It depends on Mg(2+) as a cofactor.

The enzyme catalyses [HPr protein]-L-serine + ATP = [HPr protein]-O-phospho-L-serine + ADP + H(+). It carries out the reaction [HPr protein]-O-phospho-L-serine + phosphate + H(+) = [HPr protein]-L-serine + diphosphate. Catalyzes the ATP- as well as the pyrophosphate-dependent phosphorylation of a specific serine residue in HPr, a phosphocarrier protein of the phosphoenolpyruvate-dependent sugar phosphotransferase system (PTS). HprK/P also catalyzes the pyrophosphate-producing, inorganic phosphate-dependent dephosphorylation (phosphorolysis) of seryl-phosphorylated HPr (P-Ser-HPr). The two antagonistic activities of HprK/P are regulated by several intracellular metabolites, which change their concentration in response to the absence or presence of rapidly metabolisable carbon sources (glucose, fructose, etc.) in the growth medium. Therefore, by controlling the phosphorylation state of HPr, HPrK/P is a sensor enzyme that plays a major role in the regulation of carbon metabolism and sugar transport: it mediates carbon catabolite repression (CCR), and regulates PTS-catalyzed carbohydrate uptake and inducer exclusion. In Streptococcus mutans serotype c (strain ATCC 700610 / UA159), this protein is HPr kinase/phosphorylase (hprK).